The primary structure comprises 140 residues: MDTRGSFSCGFLLLLLIQLQPSRANPIYNLSPAKELASMEALLERLEDKFALIEALESNPDLQEPQTQEEIPPELTDDSDEQKAEPKLASNTPLSYRNPFLKRLRGVQMPRMMRDSGCFGRRIDRIGSLSGMGCNGSRKN.

An N-terminal signal peptide occupies residues 1-24 (MDTRGSFSCGFLLLLLIQLQPSRA). The propeptide occupies 25–111 (NPIYNLSPAK…KRLRGVQMPR (87 aa)). Residues 55-94 (ALESNPDLQEPQTQEEIPPELTDDSDEQKAEPKLASNTPL) are disordered. A compositionally biased stretch (acidic residues) spans 71–80 (IPPELTDDSD). A disulfide bridge connects residues Cys118 and Cys134.

This sequence belongs to the natriuretic peptide family. Cleaved by CORIN upon secretion to produce the functional hormone.

Its subcellular location is the secreted. Its function is as follows. Hormone playing a key role in cardiovascular homeostasis through regulation of natriuresis, diuresis, and vasodilation. Specifically binds and stimulates the cGMP production of the NPR1 receptor. Binds the clearance receptor NPR3. The chain is Natriuretic peptides A (NPPA) from Gallus gallus (Chicken).